We begin with the raw amino-acid sequence, 488 residues long: MFVTFICFLACLTCSYGQPRAQQYVVPSAKLEAIYPKGLRVSIPDDGFSLFAFHGKLNEEMDGLEAGHWARDITKPKEGRWTFRDRNVKLKLGDKIYFWTYVIKDGLGYRQDNGEWTVTEFVNEDGTPADTSLEPTTAPTPVRPDQPNQPIPTHRPDPPCTVSATMVDGRKSVCQGTLLFSEEFEKANLKDLANWEAEVKFPEEPDYPFNVYMVDGTLELEDGSLVLTPKLLESRFHAGILNDALDLTNRCSGQVDTTECRRQASGAQILPPVMTGKITTKNKFTFKFGRVEVRAKLPAGNWLLPEINLEPKDNVFGSRRYESGLMRVAFAKGNAVFAKKLNGGPVLADTEPFRSLLMKEKIGIDNWNRDYHNYTLIWKQDGIDMLVDGEKYGSISPGEGFYALGREHAVPHAAHWLRGSVMAPLDQYFFLSLGLRVGGVHDFADSPDKPWKNRSNKAVLNFWNDRDNWFPTWFDANLKVDYVRVYAL.

The N-terminal stretch at 1–17 (MFVTFICFLACLTCSYG) is a signal peptide. Residues 18-135 (QPRAQQYVVP…GTPADTSLEP (118 aa)) form a binds to curdlan, laminarihexaose and laminarin. The complex formation with laminarin induces self-association of the complexes into a macro structure, likely containing six protein and three laminarin molecules. The macro structures may form a platform on a microbial surface for recruitment of downstream proteases, as a means of amplification of the initial signal of pathogen recognition for the activation of the phenoloxidase cascade region. Positions 18–198 (QPRAQQYVVP…LKDLANWEAE (181 aa)) are binds to curdlan, lipopolysaccharide and lipoteichoic acid, activates the phenoloxidase cascade and is resistant to proteolytic degradation by trypsin or chymotrypsin, but is not as effective as the full-length protein in aggregation of microorganisms. In terms of domain architecture, CBM39 spans 24–123 (YVVPSAKLEA…GEWTVTEFVN (100 aa)). The segment at 24–127 (YVVPSAKLEA…VTEFVNEDGT (104 aa)) is binds to laminarihexaose and laminarin. Substrate is bound by residues D72, 99-101 (WTY), and R110. A disordered region spans residues 125-158 (DGTPADTSLEPTTAPTPVRPDQPNQPIPTHRPDP). Polar residues predominate over residues 129 to 139 (ADTSLEPTTAP). Positions 141–150 (PVRPDQPNQP) are enriched in pro residues. Positions 144–488 (PDQPNQPIPT…KVDYVRVYAL (345 aa)) constitute a GH16 domain. The binds to laminarin, but not to curdlan, does not activate the phenoloxidase cascade, is susceptible to proteinase digestion by trypsin or chymotrypsin and does not cause aggregation of microorganisms stretch occupies residues 199–488 (VKFPEEPDYP…KVDYVRVYAL (290 aa)). N373 and N453 each carry an N-linked (GlcNAc...) asparagine glycan.

This sequence belongs to the insect beta-1,3-glucan binding protein family. In terms of assembly, monomer. The N-terminus is blocked. In terms of tissue distribution, fat body and hemolymph.

It is found in the secreted. Involved in the recognition of invading microorganisms causing their aggregation. Activates the phenoloxidase cascade. Binds specifically to beta-1,3-glucan. Binds to curdlan, a linear water-insoluble beta-1,3-glucan polysaccharide, and to laminarin, a water-soluble beta-1,3-glucan polysaccharide containing beta-1,6 branches. Also binds to lipopolysaccharide and lipoteichoic acid. The sequence is that of Beta-1,3-glucan-binding protein from Plodia interpunctella (Indianmeal moth).